Here is a 201-residue protein sequence, read N- to C-terminus: Small ribosomal subunit protein uS4c (201 aa).

Residues 17-44 (ALPGLTNKKPRNGSDLRNQSRSGKKSQY) form a disordered region. The S4 RNA-binding domain occupies 89–149 (MRLDNILFRL…DEQKSRALIQ (61 aa)).

Belongs to the universal ribosomal protein uS4 family. As to quaternary structure, part of the 30S ribosomal subunit. Contacts protein S5. The interaction surface between S4 and S5 is involved in control of translational fidelity.

Its subcellular location is the plastid. The protein resides in the chloroplast. Functionally, one of the primary rRNA binding proteins, it binds directly to 16S rRNA where it nucleates assembly of the body of the 30S subunit. In terms of biological role, with S5 and S12 plays an important role in translational accuracy. This is Small ribosomal subunit protein uS4c (rps4) from Nicotiana sylvestris (Wood tobacco).